Here is a 1120-residue protein sequence, read N- to C-terminus: MGFAEKNLYDFRFLLFISIILSCSISASATIAEANALLKWKSTFTNSSKLSSWVHDANTNTSFSCTSWYGVSCNSRGSIEELNLTNTGIEGTFQDFPFISLSNLAYVDLSMNLLSGTIPPQFGNLSKLIYFDLSTNHLTGEISPSLGNLKNLTVLYLHQNYLTSVIPSELGNMESMTDLALSQNKLTGSIPSSLGNLKNLMVLYLYENYLTGVIPPELGNMESMTDLALSQNKLTGSIPSTLGNLKNLMVLYLYENYLTGVIPPEIGNMESMTNLALSQNKLTGSIPSSLGNLKNLTLLSLFQNYLTGGIPPKLGNIESMIDLELSNNKLTGSIPSSLGNLKNLTILYLYENYLTGVIPPELGNMESMIDLQLNNNKLTGSIPSSFGNLKNLTYLYLYLNYLTGVIPQELGNMESMINLDLSQNKLTGSVPDSFGNFTKLESLYLRVNHLSGAIPPGVANSSHLTTLILDTNNFTGFFPETVCKGRKLQNISLDYNHLEGPIPKSLRDCKSLIRARFLGNKFTGDIFEAFGIYPDLNFIDFSHNKFHGEISSNWEKSPKLGALIMSNNNITGAIPTEIWNMTQLVELDLSTNNLFGELPEAIGNLTNLSRLRLNGNQLSGRVPAGLSFLTNLESLDLSSNNFSSEIPQTFDSFLKLHDMNLSRNKFDGSIPRLSKLTQLTQLDLSHNQLDGEIPSQLSSLQSLDKLDLSHNNLSGLIPTTFEGMIALTNVDISNNKLEGPLPDTPTFRKATADALEENIGLCSNIPKQRLKPCRELKKPKKNGNLVVWILVPILGVLVILSICANTFTYCIRKRKLQNGRNTDPETGENMSIFSVDGKFKYQDIIESTNEFDPTHLIGTGGYSKVYRANLQDTIIAVKRLHDTIDEEISKPVVKQEFLNEVKALTEIRHRNVVKLFGFCSHRRHTFLIYEYMEKGSLNKLLANDEEAKRLTWTKRINVVKGVAHALSYMHHDRITPIVHRDISSGNILLDNDYTAKISDFGTAKLLKTDSSNWSAVAGTYGYVAPEFAYTMKVTEKCDVYSFGVLILELIIGKHPGDLVSSLSSSPGEALSLRSISDERVLEPRGQNREKLLKMVEMALLCLQANPESRPTMLSISTTFS.

Positions 1-29 (MGFAEKNLYDFRFLLFISIILSCSISASA) are cleaved as a signal peptide. At 30-783 (TIAEANALLK…RELKKPKKNG (754 aa)) the chain is on the extracellular side. 4 N-linked (GlcNAc...) asparagine glycosylation sites follow: N46, N60, N83, and N124. LRR repeat units lie at residues 78–100 (SIEE…PFIS), 103–125 (NLAY…FGNL), 127–150 (KLIY…GNLK), 151–172 (NLTV…ELGN), 175–198 (SMTD…GNLK), 199–221 (NLMV…LGNM), 223–246 (SMTD…GNLK), 247–269 (NLMV…IGNM), 271–294 (SMTN…GNLK), 295–317 (NLTL…LGNI), 319–342 (SMID…GNLK), 343–365 (NLTI…LGNM), 367–389 (SMID…FGNL), 391–412 (NLTY…ELGN), 415–437 (SMIN…FGNF), 439–461 (KLES…VANS), 463–484 (HLTT…TVCK), 487–510 (KLQN…RDCK), 535–557 (DLNF…WEKS), 559–581 (KLGA…IWNM), 583–605 (QLVE…IGNL), 607–630 (NLSR…SFLT), 631–652 (NLES…TFDS), 655–677 (KLHD…SKLT), 678–701 (QLTQ…SSLQ), 702–723 (SLDK…TFEG), and 726–748 (ALTN…PTFR). N151 carries an N-linked (GlcNAc...) asparagine glycan. The N-linked (GlcNAc...) asparagine glycan is linked to N295. N343 carries an N-linked (GlcNAc...) asparagine glycan. 5 N-linked (GlcNAc...) asparagine glycosylation sites follow: N391, N436, N460, N473, and N490. Residues N569, N580, N604, N607, N641, and N660 are each glycosylated (N-linked (GlcNAc...) asparagine). A glycan (N-linked (GlcNAc...) asparagine) is linked at N712. A helical transmembrane segment spans residues 784–804 (NLVVWILVPILGVLVILSICA). Residues 805–1120 (NTFTYCIRKR…TMLSISTTFS (316 aa)) are Cytoplasmic-facing. Residue T848 is modified to Phosphothreonine. The Protein kinase domain maps to 851-1120 (FDPTHLIGTG…TMLSISTTFS (270 aa)). ATP-binding positions include 857–865 (IGTGGYSKV) and K878. 2 positions are modified to phosphotyrosine: Y929 and Y968. The active-site Proton acceptor is D981. S1014 carries the phosphoserine modification. Phosphotyrosine occurs at positions 1022 and 1029. A Phosphothreonine modification is found at T1030.

The protein belongs to the protein kinase superfamily. Ser/Thr protein kinase family.

The protein resides in the membrane. It carries out the reaction L-seryl-[protein] + ATP = O-phospho-L-seryl-[protein] + ADP + H(+). The catalysed reaction is L-threonyl-[protein] + ATP = O-phospho-L-threonyl-[protein] + ADP + H(+). This chain is Probable leucine-rich repeat receptor-like protein kinase At1g35710, found in Arabidopsis thaliana (Mouse-ear cress).